A 146-amino-acid chain; its full sequence is DNA-directed RNA polymerases II, IV and V subunit 8B (146 aa).

Belongs to the eukaryotic RPB8 RNA polymerase subunit family. In terms of assembly, component of the RNA polymerase II, IV and V complexes. Associates with the mediator complex.

It localises to the nucleus. Functionally, DNA-dependent RNA polymerase catalyzes the transcription of DNA into RNA using the four ribonucleoside triphosphates as substrates. Component of RNA polymerase II which synthesizes mRNA precursors and many functional non-coding RNAs. Pol II is the central component of the basal RNA polymerase II transcription machinery. It is composed of mobile elements that move relative to each other. Component of RNA polymerases IV and V which mediate short-interfering RNAs (siRNA) accumulation and subsequent RNA-directed DNA methylation-dependent (RdDM) transcriptional gene silencing (TGS) of endogenous repeated sequences, including transposable elements. This chain is DNA-directed RNA polymerases II, IV and V subunit 8B (NRPB8B), found in Arabidopsis thaliana (Mouse-ear cress).